A 719-amino-acid chain; its full sequence is Solute carrier family 15 member 2 (719 aa).

Over 1-43 (MGKMKDKDVDAEKYEKAQRSPKLCGTNYPVSIAFIVVNEFCER) the chain is Cytoplasmic. The helical transmembrane segment at 44-61 (FSYYGMKAVLTLYFMNYL) threads the bilayer. The Extracellular segment spans residues 62 to 69 (HWDKNLST). An N-linked (GlcNAc...) asparagine glycan is attached at asparagine 66. Residues 70-90 (AIYHAFSGLCYFTPLLGALIA) form a helical membrane-spanning segment. Topologically, residues 91–99 (DSWLGKFKT) are cytoplasmic. A helical membrane pass occupies residues 100–120 (IIYLSIVYVIGHVVKSVGAIP). At 121–125 (DVGDS) the chain is on the extracellular side. Residues 126 to 146 (TVHIALSMVGLGLIALGTGGI) traverse the membrane as a helical segment. Residues 147–169 (KPCVAAFGGDQFDEDNIDERRKF) are Cytoplasmic-facing. Residues 170 to 190 (FSIFYMSINAGSVLSTIITPI) traverse the membrane as a helical segment. Residues 191–201 (LRGDVQCFGGD) are Extracellular-facing. A helical transmembrane segment spans residues 202 to 222 (CYALAFGVPAALMVIALVVFI). Over 223–280 (SGSGLYKKSPPEGNVLVRVCKCIGFAISNRWTNSKKSPKRSHWLDWAEEKYSKRLIQE) the chain is Cytoplasmic. A helical transmembrane segment spans residues 281-301 (IKMVCRVLVLYIPLPMFWALF). Residues 302–334 (DQQGSRWTLQATRMNMDFGGGFIIKPDQMQMLN) lie on the Extracellular side of the membrane. A helical membrane pass occupies residues 335–355 (ALLILVFIPIFDMGIYPLVGL). The Cytoplasmic portion of the chain corresponds to 356 to 367 (CRIKLTPLKKMA). The chain crosses the membrane as a helical span at residues 368–388 (TGMILAALAFCAATAVEVYVI). At 389–594 (KTVVEPPPAK…QANNIHIGWQ (206 aa)) the chain is on the extracellular side. The interval 389 to 594 (KTVVEPPPAK…QANNIHIGWQ (206 aa)) is extracellular domain (ECD). N-linked (GlcNAc...) asparagine glycans are attached at residues asparagine 481, asparagine 513, and asparagine 532. A helical membrane pass occupies residues 595 to 615 (IPQYVFLTAGEVMFSITGLEF). The Cytoplasmic portion of the chain corresponds to 616-626 (SYSQAPASMKS). Residues 627–647 (VLQAGWLMTVAFGNVIVLIVA) form a helical membrane-spanning segment. The Extracellular segment spans residues 648-657 (EGAGMEQWVE). The helical transmembrane segment at 658–678 (FLLFAALLVAVSIIFSIMAYF) threads the bilayer. Topologically, residues 679–719 (YTYVDPDQLDKLFKEDGDGGKVESSKKDELSLGDMPKQTKM) are cytoplasmic. The segment covering 695–708 (GDGGKVESSKKDEL) has biased composition (basic and acidic residues). The interval 695 to 719 (GDGGKVESSKKDELSLGDMPKQTKM) is disordered.

It belongs to the major facilitator superfamily. Proton-dependent oligopeptide transporter (POT/PTR) (TC 2.A.17) family. As to expression, expressed in kidney, brain and gut. Also expressed weakly in eye, gill and skeletal muscle.

The protein localises to the apical cell membrane. It is found in the cytoplasmic vesicle. It localises to the phagosome membrane. Its subcellular location is the cell membrane. It catalyses the reaction a dipeptide(out) + 2 H(+)(out) = a dipeptide(in) + 2 H(+)(in). The catalysed reaction is N-acetyl-D-muramoyl-L-alanyl-D-isoglutamine(out) + 3 H(+)(out) = N-acetyl-D-muramoyl-L-alanyl-D-isoglutamine(in) + 3 H(+)(in). It carries out the reaction glycyl-L-leucine(out) + 2 H(+)(out) = glycyl-L-leucine(in) + 2 H(+)(in). The enzyme catalyses glycyl-L-lysine(out) + 2 H(+)(out) = glycyl-L-lysine(in) + 2 H(+)(in). It catalyses the reaction glycyl-L-glutamate(out) + 3 H(+)(out) = glycyl-L-glutamate(in) + 3 H(+)(in). The catalysed reaction is L-alanyl-L-alanine(out) + 2 H(+)(out) = L-alanyl-L-alanine(in) + 2 H(+)(in). It carries out the reaction an L-amino acid tripeptide(out) + 2 H(+)(out) = an L-amino acid tripeptide(in) + 2 H(+)(in). The enzyme catalyses carnosine(out) + 2 H(+)(out) = carnosine(in) + 2 H(+)(in). Its function is as follows. Proton-coupled amino-acid transporter that transports oligopeptides of 2 to 4 amino acids with a preference for dipeptides. Transports neutral and anionic dipeptides with a proton to peptide stoichiometry of 2:1 or 3:1. This Danio rerio (Zebrafish) protein is Solute carrier family 15 member 2.